The chain runs to 184 residues: Photosystem I assembly protein Ycf4 (184 aa).

2 helical membrane-spanning segments follow: residues 21 to 41 and 63 to 83; these read YFWATIILLGGLSFFLVGLSS and IIMTFYGTAAILISLFLWLTI.

This sequence belongs to the Ycf4 family.

Its subcellular location is the plastid. It is found in the chloroplast thylakoid membrane. Its function is as follows. Seems to be required for the assembly of the photosystem I complex. This is Photosystem I assembly protein Ycf4 from Gracilaria tenuistipitata var. liui (Red alga).